We begin with the raw amino-acid sequence, 510 residues long: Transcriptional regulatory protein GAT1 (510 aa).

A Phosphoserine modification is found at Ser167. Residues Asn220–Leu256 are compositionally biased toward low complexity. Disordered regions lie at residues Asn220–Ser311 and Gln358–Lys383. Phosphoserine occurs at positions 262 and 270. Positions Ser274–Lys287 are enriched in basic residues. The segment covering Ser294 to Pro306 has biased composition (low complexity). Residues Cys310–Cys334 form a GATA-type zinc finger. Thr369 bears the Phosphothreonine mark. Phosphoserine occurs at positions 399 and 418.

The protein resides in the nucleus. Positive regulator of multiple nitrogen catabolic genes. This chain is Transcriptional regulatory protein GAT1 (GAT1), found in Saccharomyces cerevisiae (strain ATCC 204508 / S288c) (Baker's yeast).